A 164-amino-acid chain; its full sequence is UPF0114 protein YqhA (164 aa).

3 consecutive transmembrane segments (helical) span residues 10–32, 53–75, and 136–155; these read YASRWLLAPVYFGLSLALVALAL, LILVLLSLVDMTLVGGLLVMVMF, and LMWYVIIHLTFVLSAFVMGY.

It belongs to the UPF0114 family.

The protein localises to the cell membrane. The chain is UPF0114 protein YqhA from Shigella flexneri.